The following is a 175-amino-acid chain: Translation initiation factor IF-3 (175 aa).

Belongs to the IF-3 family. In terms of assembly, monomer.

It localises to the cytoplasm. Functionally, IF-3 binds to the 30S ribosomal subunit and shifts the equilibrium between 70S ribosomes and their 50S and 30S subunits in favor of the free subunits, thus enhancing the availability of 30S subunits on which protein synthesis initiation begins. The chain is Translation initiation factor IF-3 from Staphylococcus epidermidis (strain ATCC 35984 / DSM 28319 / BCRC 17069 / CCUG 31568 / BM 3577 / RP62A).